The primary structure comprises 203 residues: Ras-related protein Rab-30 (203 aa).

GTP-binding residues include Val20, Gly21, Lys22, Thr23, Cys24, and Thr41. Thr23 lines the Mg(2+) pocket. Residues 36-44 (PGQGATIGV) are switch-I. 2 residues coordinate Mg(2+): Thr41 and Asp64. Residues Gly67, Asn122, Lys123, Asp125, Ala153, and Lys154 each coordinate GTP. A switch-II region spans residues 67 to 83 (GQERFRSITQSYYRSAN). Residues Cys199 and Cys200 are each lipidated (S-geranylgeranyl cysteine). A Cysteine methyl ester modification is found at Cys200. Residues 201–203 (NFN) constitute a propeptide, removed in mature form.

It belongs to the small GTPase superfamily. Rab family. Mg(2+) is required as a cofactor.

It is found in the membrane. The protein localises to the golgi apparatus. It localises to the trans-Golgi network membrane. The protein resides in the cis-Golgi network membrane. Its subcellular location is the golgi apparatus membrane. It is found in the cytoplasm. The protein localises to the cytoplasmic vesicle. It localises to the autophagosome membrane. The protein resides in the autolysosome membrane. It carries out the reaction GTP + H2O = GDP + phosphate + H(+). With respect to regulation, regulated by guanine nucleotide exchange factors (GEFs) which promote the exchange of bound GDP for free GTP. Regulated by GTPase activating proteins (GAPs) which increase the GTP hydrolysis activity. Inhibited by GDP dissociation inhibitors (GDIs). Its function is as follows. The small GTPases Rab are key regulators of intracellular membrane trafficking, from the formation of transport vesicles to their fusion with membranes. Rabs cycle between an inactive GDP-bound form and an active GTP-bound form that is able to recruit to membranes different sets of downstream effectors directly responsible for vesicle formation, movement, tethering and fusion. RAB30 is required for maintaining the structural integrity of the Golgi apparatus, possibly by mediating interactions with cytoplasmic scaffolding proteins. Facilitates lipid homeostasis during fasting by regulating hepatic protein and lipid trafficking in a PPAR-alpha-dependent manner. Promotes autophagosome biogenesis during bacterial infection such as group A Streptococcus infection. This is Ras-related protein Rab-30 (RAB30) from Bos taurus (Bovine).